Here is a 342-residue protein sequence, read N- to C-terminus: S-adenosyl-L-methionine-dependent tRNA 4-demethylwyosine synthase (342 aa).

Positions 45, 58, and 71 each coordinate [2Fe-2S] cluster. The Radical SAM core domain maps to tyrosine 64–glutamate 312. Positions 81, 85, and 88 each coordinate [4Fe-4S] cluster.

The protein belongs to the TYW1 family. As to quaternary structure, monomer. Requires [2Fe-2S] cluster as cofactor. [4Fe-4S] cluster is required as a cofactor.

It localises to the cytoplasm. It catalyses the reaction N(1)-methylguanosine(37) in tRNA(Phe) + pyruvate + S-adenosyl-L-methionine = 4-demethylwyosine(37) in tRNA(Phe) + 5'-deoxyadenosine + L-methionine + CO2 + H2O. Its function is as follows. Component of the wyosine derivatives biosynthesis pathway that catalyzes the condensation of N-methylguanine with 2 carbon atoms from pyruvate to form the tricyclic 4-demethylwyosine (imG-14) on guanosine-37 of tRNA(Phe). This is S-adenosyl-L-methionine-dependent tRNA 4-demethylwyosine synthase from Pyrococcus horikoshii (strain ATCC 700860 / DSM 12428 / JCM 9974 / NBRC 100139 / OT-3).